The primary structure comprises 814 residues: Coiled-coil and C2 domain-containing protein 1-like (814 aa).

The span at 1-11 shows a compositional bias: basic and acidic residues; it reads MFAKRKPEPAK. 2 disordered regions span residues 1 to 136 and 157 to 263; these read MFAK…TFLP and EANA…RSRQ. Residues 25–47 are compositionally biased toward acidic residues; that stretch reads IPDDFDPTSGYGDDDGGDSDLEA. Residues 73–85 show a composition bias toward basic and acidic residues; sequence DLDKMIADSLRDV. 2 stretches are compositionally biased toward acidic residues: residues 86–100 and 110–130; these read SDDD…DSDL and LEEE…EEEP. The segment at 143–201 is DM14 1; it reads LGIIKQRLEIYKQAEANAKASGDSGKARRFGRGLKTLQDLHKQAAAGKTINVDDIPPEV. Positions 205-230 are enriched in low complexity; it reads PAGDPSPAADESPAPSTPVSQPTRVA. Positions 231-254 are enriched in pro residues; the sequence is PAPPTPTSPPAATPPPAPATPPNP. DM14 stretches follow at residues 256 to 314 and 358 to 416; these read VAQM…PPPP and LEAL…PVPP. Residues 351–378 adopt a coiled-coil conformation; it reads AAAAESMLEALQRRLEKYKSVEAAAKAE. The segment covering 414-425 has biased composition (pro residues); that stretch reads VPPGFGPLPSTE. Positions 414-486 are disordered; that stretch reads VPPGFGPLPS…LTTRVTGNHQ (73 aa). The span at 426–462 shows a compositional bias: low complexity; sequence PAPAATPSLPTSPTSPPATASTSAGGTPSGSSATTPT. Positions 475 to 486 are enriched in polar residues; that stretch reads TELTTRVTGNHQ. A DM14 4 region spans residues 495-553; it reads MKLLLERQKEFKVAAIEAKKAGEIDQAKEYLKIYKGFDSLLNAASSGLPVDLSTLPVPP. In terms of domain architecture, C2 spans 633–772; that stretch reads RKGQPLPKFH…ETKCDIHDTY (140 aa).

This sequence belongs to the CC2D1 family. Interacts (via DM14 domains 1 and 3) with shrb; the interaction is direct and blocks access to the surface involved in shrb polymerization. This interaction may be required for the ESCRT-III complex role in multivesicular body formation.

Its subcellular location is the cytoplasm. It localises to the cytosol. The protein localises to the apicolateral cell membrane. The protein resides in the cell cortex. It is found in the endosome. Functionally, phosphatidyl inositol monophosphate binding protein involved in endosomal protein sorting through regulation of the endosomal sorting required for transport (ESCRT) pathway. Required for full activity of the ESCRT-III complex core component shrb/shrub, probably by preventing its inappropriate polymerisation. Required, but not essential, for the efficient generation of intraluminal vesicles (ILVs) in multivesicular bodies (MVBs). Involved in a late stage of the endosomal pathway targeting transmembrane proteins of the plasma membrane for lysosomal degradation. Plays a critical role in regulation of multiple signal transduction pathways, including the Notch and BMP/decapentaplegic (dpp) signaling pathways, through targeting of membrane bound receptors to multivesicular bodies, isolating them from the cytoplasm and targeting them for lysosomal degradation. Involved in targeting N/Notch for endosomal degradation, negatively regulating the Notch signaling pathway. Regulates Notch signaling in imaginal disk cells and follicle cells during oogenesis and multiple developmental processes, including development of wings, veins, legs, eyes and bristles. Restricts the activity of Notch to the dorsoventral (D/V) boundary of the wing imaginal disk. In external sensory organ development regulates Notch signaling during asymmetric cell division and differentiation of sensory organ precursor cells. May be involved in regulation of apoptosis and cell growth independent of Notch signaling. Involved in targeting tkv for endosomal degradation, negatively regulating the BMP/decapentaplegic (dpp) signaling pathway. Regulates the BMP/dpp signaling pathway in follicle cells during oogenesis, but not in imaginal disk cells during wing development. May be involved in differentiation or morphogenesis of peripodial epithelial cells in the developing imaginal disk. Involved in abscission of germline cells during oogenesis. This chain is Coiled-coil and C2 domain-containing protein 1-like, found in Drosophila pseudoobscura pseudoobscura (Fruit fly).